The following is a 588-amino-acid chain: Schlafen family member 12-like (588 aa).

A helical membrane pass occupies residues Ile-566–Phe-586.

Belongs to the Schlafen family.

The protein resides in the membrane. The polypeptide is Schlafen family member 12-like (SLFN12L) (Homo sapiens (Human)).